A 47-amino-acid chain; its full sequence is U18-ctenitoxin-Pn1a (47 aa).

Disulfide bonds link Cys-2-Cys-16, Cys-9-Cys-22, Cys-13-Cys-46, Cys-15-Cys-34, and Cys-24-Cys-32.

Expressed by the venom gland.

The protein resides in the secreted. In terms of biological role, neurotoxin. Causes spastic paralysis and death in mice by intracerebroventricular injection at dose levels of 3 ug per mouse. This Phoneutria nigriventer (Brazilian armed spider) protein is U18-ctenitoxin-Pn1a.